The chain runs to 24 residues: Brevinin-1BYa (24 aa).

An intrachain disulfide couples Cys18 to Cys24.

In terms of tissue distribution, expressed by the skin glands.

It localises to the secreted. In terms of biological role, antibacterial activity against Gram-positive bacterium S.aureus and Gram-negative bacterium E.coli. High antifungal activity against C.albicans and a strong hemolytic activity. The sequence is that of Brevinin-1BYa from Rana boylii (Foothill yellow-legged frog).